A 116-amino-acid polypeptide reads, in one-letter code: Co-chaperonin GroES (116 aa).

It belongs to the GroES chaperonin family. As to quaternary structure, heptamer of 7 subunits arranged in a ring. Interacts with the chaperonin GroEL.

It is found in the cytoplasm. Functionally, together with the chaperonin GroEL, plays an essential role in assisting protein folding. The GroEL-GroES system forms a nano-cage that allows encapsulation of the non-native substrate proteins and provides a physical environment optimized to promote and accelerate protein folding. GroES binds to the apical surface of the GroEL ring, thereby capping the opening of the GroEL channel. This Mycoplasma pneumoniae (strain ATCC 29342 / M129 / Subtype 1) (Mycoplasmoides pneumoniae) protein is Co-chaperonin GroES.